Here is a 298-residue protein sequence, read N- to C-terminus: ATP phosphoribosyltransferase (298 aa).

The protein belongs to the ATP phosphoribosyltransferase family. Long subfamily. Mg(2+) is required as a cofactor.

It localises to the cytoplasm. It catalyses the reaction 1-(5-phospho-beta-D-ribosyl)-ATP + diphosphate = 5-phospho-alpha-D-ribose 1-diphosphate + ATP. It functions in the pathway amino-acid biosynthesis; L-histidine biosynthesis; L-histidine from 5-phospho-alpha-D-ribose 1-diphosphate: step 1/9. Feedback inhibited by histidine. In terms of biological role, catalyzes the condensation of ATP and 5-phosphoribose 1-diphosphate to form N'-(5'-phosphoribosyl)-ATP (PR-ATP). Has a crucial role in the pathway because the rate of histidine biosynthesis seems to be controlled primarily by regulation of HisG enzymatic activity. The polypeptide is ATP phosphoribosyltransferase (Aliivibrio fischeri (strain MJ11) (Vibrio fischeri)).